We begin with the raw amino-acid sequence, 341 residues long: S-adenosylmethionine:tRNA ribosyltransferase-isomerase (341 aa).

The protein belongs to the QueA family. In terms of assembly, monomer.

The protein resides in the cytoplasm. The enzyme catalyses 7-aminomethyl-7-carbaguanosine(34) in tRNA + S-adenosyl-L-methionine = epoxyqueuosine(34) in tRNA + adenine + L-methionine + 2 H(+). It functions in the pathway tRNA modification; tRNA-queuosine biosynthesis. Transfers and isomerizes the ribose moiety from AdoMet to the 7-aminomethyl group of 7-deazaguanine (preQ1-tRNA) to give epoxyqueuosine (oQ-tRNA). The protein is S-adenosylmethionine:tRNA ribosyltransferase-isomerase of Acetivibrio thermocellus (strain ATCC 27405 / DSM 1237 / JCM 9322 / NBRC 103400 / NCIMB 10682 / NRRL B-4536 / VPI 7372) (Clostridium thermocellum).